Consider the following 141-residue polypeptide: Hemoglobin subunit alpha-A (141 aa).

Positions 1–141 (VLTEEDKSRV…VAKTLVSRYR (141 aa)) constitute a Globin domain. His58 provides a ligand contact to O2. His87 is a binding site for heme b.

It belongs to the globin family. As to quaternary structure, heterotetramer of two alpha chains and two beta chains. As to expression, red blood cells.

Its function is as follows. Involved in oxygen transport from the lung to the various peripheral tissues. The chain is Hemoglobin subunit alpha-A from Drymarchon melanurus erebennus (Texas indigo snake).